We begin with the raw amino-acid sequence, 235 residues long: Superoxide dismutase [Mn] 3.1, mitochondrial (235 aa).

The transit peptide at 1–31 (MALRTLASKKVLSFPFGGAGRPLAAAASARG) directs the protein to the mitochondrion. The Mn(2+) site is built by His59, His107, Asp196, and His200.

The protein belongs to the iron/manganese superoxide dismutase family. In terms of assembly, homotetramer. Requires Mn(2+) as cofactor.

It is found in the mitochondrion matrix. The enzyme catalyses 2 superoxide + 2 H(+) = H2O2 + O2. Its function is as follows. Destroys superoxide anion radicals which are normally produced within the cells and which are toxic to biological systems. In Zea mays (Maize), this protein is Superoxide dismutase [Mn] 3.1, mitochondrial (SODA.4).